We begin with the raw amino-acid sequence, 112 residues long: uncharacterized protein (112 aa).

This is an uncharacterized protein from Rickettsia conorii (strain ATCC VR-613 / Malish 7).